The primary structure comprises 688 residues: Zinc finger and BTB domain-containing protein 48 (688 aa).

The BTB domain maps to 26-89; sequence CDATLDVGGL…FYTGHLALTS (64 aa). The interval 119–140 is disordered; sequence SVGQAAGGQSGLGPPASQNVNS. Lysine 143 is covalently cross-linked (Glycyl lysine isopeptide (Lys-Gly) (interchain with G-Cter in SUMO2)). Positions 161-192 are disordered; it reads PRDQEPRGSHSPQRPQLHSPAQSEGPSSLCGK. Serine 169, serine 171, and serine 179 each carry phosphoserine. Positions 170–186 are enriched in polar residues; sequence HSPQRPQLHSPAQSEGP. Lysine 263 is covalently cross-linked (Glycyl lysine isopeptide (Lys-Gly) (interchain with G-Cter in SUMO2)). A C2H2-type 1 zinc finger spans residues 291 to 313; the sequence is VECPTCHKKFLSKYYLKVHNRKH. Zn(2+) contacts are provided by cysteine 293, cysteine 296, histidine 309, histidine 313, cysteine 321, cysteine 324, histidine 337, cysteine 342, cysteine 352, cysteine 355, histidine 368, histidine 372, cysteine 380, cysteine 383, histidine 396, and histidine 401. The CCHC-type zinc-finger motif lies at 319–344; it reads FECPKCGKCYFRKENLLEHEARNCMN. C2H2-type zinc fingers lie at residues 350 to 372, 378 to 401, 407 to 430, 436 to 459, 465 to 487, 493 to 515, 521 to 544, 550 to 572, and 578 to 600; these read FTCSVCQETFRRRMELRVHMVSH, YKCSSCSQQFMQKKDLQSHMIKLH, HACPTCAKCFLSRTELQLHEAFKH, FVCEECGHRASSRNGLQMHIKAKH, HVCEFCSHAFTQKANLNMHLRTH, FQCHLCGKTFRTQASLDKHNRTH, FSCEFCEQRFTEKGPLLRHVASRH, HFCQICGKTFKAVEQLRVHVRRH, and FECTECGYKFTRQAHLRRHMEIH. Positions 552, 555, 568, 580, 583, 596, and 600 each coordinate Zn(2+).

Belongs to the krueppel C2H2-type zinc-finger protein family. As to quaternary structure, interacts with EP300. Detected in adrenal gland and neuroblastoma.

The protein localises to the nucleus. It localises to the chromosome. The protein resides in the telomere. Its function is as follows. Plays a critical role in transcriptional regulation and chromatin remodeling. Acts as a regulator of telomere length. Directly binds the telomeric double-stranded 5'-TTAGGG-3' repeat. Preferentially binds to telomeres that have a low concentration of shelterin complex and acts as a regulator of telomere length by initiating telomere trimming, a process that prevents the accumulation of aberrantly long telomeres. Also acts as a transcription regulator that binds to promoter regions. Regulates expression of a small subset of genes, including MTFP1. Acts as a negative regulator of cell proliferation by specifically activating expression of ARF, a tumor suppressor isoform of CDKN2A. Acts as a transcription regulator of CIITA, the major factor regulating MHC class II gene expression. In addition, regulates cellular m6A/m6Am methylation on RNA by facilitating the recruitment of the RNA demethylase, FTO, to target mRNAs. The polypeptide is Zinc finger and BTB domain-containing protein 48 (Homo sapiens (Human)).